The chain runs to 100 residues: Integration host factor subunit alpha (100 aa).

A disordered region spans residues 53 to 72; sequence FDLRDKRQRPGRNPKTGEEI.

Belongs to the bacterial histone-like protein family. Heterodimer of an alpha and a beta chain.

This protein is one of the two subunits of integration host factor, a specific DNA-binding protein that functions in genetic recombination as well as in transcriptional and translational control. This is Integration host factor subunit alpha from Pseudomonas putida (strain ATCC 700007 / DSM 6899 / JCM 31910 / BCRC 17059 / LMG 24140 / F1).